Reading from the N-terminus, the 699-residue chain is Elongation factor G (699 aa).

The region spanning 8–283 (EQIRNIGICA…AIVDFLPSPI (276 aa)) is the tr-type G domain. Residues 17-24 (AHIDAGKT), 81-85 (DTPGH), and 135-138 (NKMD) each bind GTP.

It belongs to the TRAFAC class translation factor GTPase superfamily. Classic translation factor GTPase family. EF-G/EF-2 subfamily.

The protein localises to the cytoplasm. In terms of biological role, catalyzes the GTP-dependent ribosomal translocation step during translation elongation. During this step, the ribosome changes from the pre-translocational (PRE) to the post-translocational (POST) state as the newly formed A-site-bound peptidyl-tRNA and P-site-bound deacylated tRNA move to the P and E sites, respectively. Catalyzes the coordinated movement of the two tRNA molecules, the mRNA and conformational changes in the ribosome. This chain is Elongation factor G (fusA), found in Rickettsia prowazekii (strain Madrid E).